The sequence spans 1391 residues: MEARSRSAEELRRAELVEIIVETEAQTGVSGFNVAGGGKEGIFVRELREDSPAAKSLSLQEGDQLLSARVFFENFKYEDALRLLQCAEPYKVSFCLKRTVPTGDLALRPGTVSGYEMKGPRAKVAKLNIQSLAPVKKKKMVTGALGTPADLAPVDVEFSFPKFSRLRRGLKAEAVKGPVPAAPARRRLQLPRLRVREVAEEAQVARMAAAAPPPRKAKAEAEAATGAGFTAPQIELVGPRLPSAEVGVPQVSVPKGTPSTEAASGFALHLPTLGLGAPAAPAVEPPATGIQVPQVELPTLPSLPTLPTLPCLDTQEGAAVVKVPTLDVAAPSMGVDLALPGAEVEAQGEVPEVALKMPRLSFPRFGIRGKEATEAKVVKGSPEAKAKGPRLRMPTFGLSLLEPRPSGPEAVAESKLKLPTLKMPSFGIGVAGPEVKAPTGPEVKLPKVPEVKLPKVPEAAIPDVQLPEVQLPKMSDMKLPKIPEMVVPDVRLPEVQLPKVPEMKVPEMKLPKWPEMAVPDVHLPDVQLPKVPEMKLPKVPEMAVPDVHLPDVQLPKVPEMKLPEMKLPKVPEMAVPDVRLPEVQLPKVSEVKLPKMPEMAVPDVHLPELQLPKMSEVKLPKMPEMAVPDVRLPEVQLPKVSEMKLPKMPEMTMPDIRLPEVQLPKVPDIKLPEMKLPEIKLPKVPDMAVPDVPLPELQLPKVSDIRLPEMQVSQVPEVQLPKMPEMKLSKVPEVQRKSAGAEQAKGTEFSFKLPKMTMPKLGKVGKPGEASIEVPDKLMTLPCLQPEVGTEASHVGVPSLSLPSVELDLPGALGLEGQVQEAVPGKVEKPEGPRVAVGVGEVGFRVPSVEIVTPQLPTVEVEKEQLEMVEMKVKPSSKFSLPKFGLSGPKAVKGEVEGPGRATKLKVSKFTISLPKARAGTEAEAKGAGEAGLLPALDLSIPQLSLDAQLPSGKVEVADSKPKSSRFALPKFGVKGRDSEADVLVAGEAELEGKGWGWDGKVKMPKLKMPSFGLSRGKEAETQDGRVSPGEKLEAIAGQLKIPAVELVTPGAQETEKVTSGVKPSGLQVSTTGQVVAEGQESVQRVSTLGISLPQVELASFGEAGPEIVAPSAEGTAGSRVQVPQVMLELPGTQVAGGDLLVGEGIFKMPTVTVPQLELDVGLGHEAQAGEAAKSEGGIKLKLPTLGTGSRGEGVEPQGPEAQRTFHLSLPDVELTSPVSSHAEYQVVEGDGDGGHKLKVRLPLFGLAKAKEGIEVGEKVKSPKLRLPRVGFSQSESVSGEGSPSPEEEEEGSGEGASSRRGRVRVRLPRVGLASPSKVSKGQEGDATSKSPVGEKSPKFRFPRVSLSPKARSGSRDREEGGFRVRLPSVGFSETAVPGSTRIEGTQAAAI.

At serine 7 the chain carries Phosphoserine. Residues 16–99 enclose the PDZ domain; that stretch reads LVEIIVETEA…YKVSFCLKRT (84 aa). The Nuclear export signal motif lies at 70 to 84; that stretch reads VFFENFKYEDALRLL. Residues 118 to 196 carry the Nuclear localization signal motif; that stretch reads KGPRAKVAKL…RLQLPRLRVR (79 aa). Serine 243 is subject to Phosphoserine. Repeat copies occupy residues 432–436, 440–444, 448–452, 456–460, 464–468, 469–473, 474–478, 482–486, 487–491, 495–499, 500–504, and 508–512. A 45 X 5 AA approximate tandem repeats of [LVMGIED]-[PQSKHARMI]-[EDKLVTR]-[LIVMAP]-[AQKHRPEVSD]; that may have a tripeptide spacer of [LVIDEA]-[PMSVI]-[KEATDQ] region spans residues 432–719; that stretch reads GPEVKAPTGP…MQVSQVPEVQ (288 aa). A 13; approximate repeat occupies 513-517; it reads WPEMA. Tandem repeats lie at residues 521–525, 526–530, 534–538, 539–543, 547–551, 552–556, 560–564, 565–569, 573–577, 578–582, 583–587, 591–595, 596–600, 601–605, 609–613, 614–618, 619–623, 627–631, 632–636, 637–641, 645–649, 650–654, 655–659, 663–667, 671–675, 676–680, 684–688, 689–693, 697–701, 702–706, 707–711, and 715–719. Residues serine 848, serine 979, serine 1028, serine 1279, serine 1283, serine 1285, serine 1293, serine 1331, and serine 1337 each carry the phosphoserine modification. A disordered region spans residues 1267-1366; it reads LPRVGFSQSE…DREEGGFRVR (100 aa). Residues 1275–1285 are compositionally biased toward low complexity; that stretch reads SESVSGEGSPS. Residues 1354-1363 show a composition bias toward basic and acidic residues; sequence GSRDREEGGF. Serine 1369 carries the post-translational modification Phosphoserine.

Belongs to the periaxin family. Homodimer (via PDZ domain). Interacts with SCN10A. Found in a complex with SCN10A. Interacts with DRP2. Identified in a dystroglycan complex that contains at least PRX, DRP2, UTRN, DMD and DAG1. Detected in a complex composed of at least EZR, AHNAK, PPL and PRX. Identified in a complex with EZR, AHNAK, BFSP1, BFSP2, ANK2, PLEC, VIM and spectrin. As to expression, detected in myelinating Schwann cells in intramuscular nerves in triangularis sterni. Detected in sciatic nerve. Detected in eye lens fiber cells. Isoform 1 is detected in myelinating Schwann cells in sciatic nerve. Isoform 2 is detected in myelinating Schwann cells in sciatic nerve (at protein level). Detected in sciatic nerve.

Its subcellular location is the cell membrane. The protein resides in the cell junction. The protein localises to the nucleus. It is found in the cytoplasm. Its function is as follows. Scaffolding protein that functions as part of a dystroglycan complex in Schwann cells, and as part of EZR and AHNAK-containing complexes in eye lens fiber cells. Required for the maintenance of the peripheral myelin sheath that is essential for normal transmission of nerve impulses and normal perception of sensory stimuli. Required for normal transport of MBP mRNA from the perinuclear to the paranodal regions. Required for normal remyelination after nerve injury. Required for normal elongation of Schwann cells and normal length of the internodes between the nodes of Ranvier. The demyelinated nodes of Ranvier permit saltatory transmission of nerve impulses; shorter internodes cause slower transmission of nerve impulses. Required for the formation of appositions between the abaxonal surface of the myelin sheath and the Schwann cell plasma membrane; the Schwann cell cytoplasm is restricted to regions between these appositions. Required for the formation of Cajal bands and of Schmidt-Lanterman incisures that correspond to short, cytoplasm-filled regions on myelinated nerves. Recruits DRP2 to the Schwann cell plasma membrane. Required for normal protein composition of the eye lens fiber cell plasma membrane and normal eye lens fiber cell morphology. The protein is Periaxin (Prx) of Mus musculus (Mouse).